The sequence spans 239 residues: Fatty acid metabolism regulator protein (239 aa).

Positions 6-74 (QSPAGFAEEY…HGKPTKINNF (69 aa)) constitute an HTH gntR-type domain. Residues 34 to 53 (ERELSELIGVTRTTLREVLQ) constitute a DNA-binding region (H-T-H motif).

Homodimer.

It localises to the cytoplasm. Multifunctional regulator of fatty acid metabolism. The protein is Fatty acid metabolism regulator protein of Pectobacterium atrosepticum (strain SCRI 1043 / ATCC BAA-672) (Erwinia carotovora subsp. atroseptica).